The following is a 576-amino-acid chain: Nuclear/nucleolar GTPase 2 (576 aa).

Disordered stretches follow at residues 1–61 (MVKK…SNEY) and 166–186 (QDAF…EEED). Residues 16 to 34 (HSLDANRADGKKKTTETRS) are compositionally biased toward basic and acidic residues. A compositionally biased stretch (basic residues) spans 42–52 (KMYKTRPKRNA). One can recognise a CP-type G domain in the interval 206–367 (WGELYKVIDS…LIDCPGVVYQ (162 aa)). The DARXP motif signature appears at 224 to 228 (DARDP). A G4 region spans residues 254-257 (NKCD). A GTP-binding site is contributed by 254–257 (NKCD). Residues 283–285 (SVN) are G5. Residues 316-323 (GYPNVGKS) are G1. A GTP-binding site is contributed by 319 to 324 (NVGKSS). Residues 342–346 (GETKV) form a G2 region. The G3 stretch occupies residues 360–363 (DCPG). G363 provides a ligand contact to GTP. Positions 502 to 576 (TQQQKDVPVQ…DEEDESDSAE (75 aa)) are disordered. Basic and acidic residues predominate over residues 509–530 (PVQRDFYDEKDLKDDKKAKEST). Over residues 531–576 (ETDAENGTDAEEDEDAVSEDGVESDSDADEDAVSENDEEDESDSAE) the composition is skewed to acidic residues.

The protein belongs to the TRAFAC class YlqF/YawG GTPase family. RsgA subfamily. As to quaternary structure, interacts with the 60S ribosomal proteins RPL10AA, RPL10AB and RPL10AC. Ubiquitous, with higher levels in meristematic regions.

It is found in the nucleus. The protein resides in the nucleolus. With respect to regulation, the GTPase activity is stimulated in the presence of the 60S ribosomal subunit. GTPase involved in pre-60S ribosomal subunit maturation. The sequence is that of Nuclear/nucleolar GTPase 2 from Arabidopsis thaliana (Mouse-ear cress).